The chain runs to 317 residues: MVTVVNTLNRPRHPEKQNRPETEVLRKPDWIRVKAPGSAGWSNTAGIVRANGLHTVCEEAGCPNIGECWEKKHATFMIMGDTCTRACSFCNVRTGMPKALDLDEPQKVGEAVAKLGLSHVVITSVDRDDLTDGGAEHFARTIASIRKLSPGTTIEILTPDFLRKPGAIEVVVAARPDVFNHNLETVPGKYLTVRPGARYFHSLRLLQQVKELDPSIFTKSGIMVGLGEERNEVLQLMDDLRAAEVDFMTIGQYLQPTRKHHKVERFVTPDEFKAYETVAYAKGFLMVSSSPLTRSSHHAGDDFAKLRAAREAKLGRI.

The tract at residues 1 to 22 (MVTVVNTLNRPRHPEKQNRPET) is disordered. Residues 12–22 (RHPEKQNRPET) show a composition bias toward basic and acidic residues. [4Fe-4S] cluster contacts are provided by Cys-57, Cys-62, Cys-68, Cys-83, Cys-87, Cys-90, and Ser-296. One can recognise a Radical SAM core domain in the interval 69–285 (WEKKHATFMI…ETVAYAKGFL (217 aa)).

The protein belongs to the radical SAM superfamily. Lipoyl synthase family. [4Fe-4S] cluster serves as cofactor.

It is found in the cytoplasm. It catalyses the reaction [[Fe-S] cluster scaffold protein carrying a second [4Fe-4S](2+) cluster] + N(6)-octanoyl-L-lysyl-[protein] + 2 oxidized [2Fe-2S]-[ferredoxin] + 2 S-adenosyl-L-methionine + 4 H(+) = [[Fe-S] cluster scaffold protein] + N(6)-[(R)-dihydrolipoyl]-L-lysyl-[protein] + 4 Fe(3+) + 2 hydrogen sulfide + 2 5'-deoxyadenosine + 2 L-methionine + 2 reduced [2Fe-2S]-[ferredoxin]. It functions in the pathway protein modification; protein lipoylation via endogenous pathway; protein N(6)-(lipoyl)lysine from octanoyl-[acyl-carrier-protein]: step 2/2. Its function is as follows. Catalyzes the radical-mediated insertion of two sulfur atoms into the C-6 and C-8 positions of the octanoyl moiety bound to the lipoyl domains of lipoate-dependent enzymes, thereby converting the octanoylated domains into lipoylated derivatives. This is Lipoyl synthase from Azorhizobium caulinodans (strain ATCC 43989 / DSM 5975 / JCM 20966 / LMG 6465 / NBRC 14845 / NCIMB 13405 / ORS 571).